A 240-amino-acid polypeptide reads, in one-letter code: BLOC-1-related complex subunit 8 homolog (240 aa).

Disordered regions lie at residues 1-33 and 163-240; these read MSSILKSSTGSNHSSTSNHSSINNISQLSGSHG and KTFS…EKIN. Low complexity-rich tracts occupy residues 7-26 and 163-179; these read SSTGSNHSSTSNHSSINNIS and KTFSSFQQQHKIYQQQQ. Residues 180-190 show a composition bias toward polar residues; the sequence is TNLTPSKPTLS. Residues 196–205 are compositionally biased toward low complexity; the sequence is DNNNNNNNLN. Residues 208 to 240 show a composition bias toward basic and acidic residues; the sequence is EKIEKEEKIEKEDEGKEKDEKEKDDKDLNEKIN. A coiled-coil region spans residues 211-239; that stretch reads EKEEKIEKEDEGKEKDEKEKDDKDLNEKI.

This sequence belongs to the BORCS8 family.

The protein localises to the lysosome membrane. Its function is as follows. May participate in the coupling of lysosomes to microtubule plus-end-directed kinesin motor. The chain is BLOC-1-related complex subunit 8 homolog from Dictyostelium discoideum (Social amoeba).